The chain runs to 482 residues: Membrane-bound lytic murein transglycosylase F (482 aa).

A signal peptide spans 1–18 (MKGLFLRIITALALLFWA). Residues 19–267 (IDMVFPWQFL…NLKEKYLGHI (249 aa)) are non-LT domain. The tract at residues 268 to 482 (SQFDYVDTRS…NLEEIKENED (215 aa)) is LT domain. Glu312 is an active-site residue. The segment covering 457–470 (ENQTTNDNANNESA) has biased composition (polar residues). The segment at 457-482 (ENQTTNDNANNESAVKNLEEIKENED) is disordered. The segment covering 473–482 (NLEEIKENED) has biased composition (basic and acidic residues).

It in the N-terminal section; belongs to the bacterial solute-binding protein 3 family. In the C-terminal section; belongs to the transglycosylase Slt family.

The protein resides in the cell outer membrane. The catalysed reaction is Exolytic cleavage of the (1-&gt;4)-beta-glycosidic linkage between N-acetylmuramic acid (MurNAc) and N-acetylglucosamine (GlcNAc) residues in peptidoglycan, from either the reducing or the non-reducing ends of the peptidoglycan chains, with concomitant formation of a 1,6-anhydrobond in the MurNAc residue.. Functionally, murein-degrading enzyme that degrades murein glycan strands and insoluble, high-molecular weight murein sacculi, with the concomitant formation of a 1,6-anhydromuramoyl product. Lytic transglycosylases (LTs) play an integral role in the metabolism of the peptidoglycan (PG) sacculus. Their lytic action creates space within the PG sacculus to allow for its expansion as well as for the insertion of various structures such as secretion systems and flagella. The polypeptide is Membrane-bound lytic murein transglycosylase F (Haemophilus influenzae (strain PittGG)).